The chain runs to 478 residues: Proline--tRNA ligase (478 aa).

The protein belongs to the class-II aminoacyl-tRNA synthetase family. ProS type 3 subfamily. Homodimer.

It is found in the cytoplasm. The enzyme catalyses tRNA(Pro) + L-proline + ATP = L-prolyl-tRNA(Pro) + AMP + diphosphate. Catalyzes the attachment of proline to tRNA(Pro) in a two-step reaction: proline is first activated by ATP to form Pro-AMP and then transferred to the acceptor end of tRNA(Pro). The protein is Proline--tRNA ligase of Clostridium novyi (strain NT).